We begin with the raw amino-acid sequence, 194 residues long: Inosine triphosphate pyrophosphatase (194 aa).

ITP is bound at residue 10–15 (TTNLKK). A Mg(2+)-binding site is contributed by E36. Residues K48, 66-67 (DT), K83, K166, and 171-172 (HR) each bind ITP.

It belongs to the HAM1 NTPase family. In terms of assembly, homodimer. Mg(2+) is required as a cofactor. Requires Mn(2+) as cofactor.

It localises to the cytoplasm. It is found in the nucleus. It catalyses the reaction ITP + H2O = IMP + diphosphate + H(+). It carries out the reaction dITP + H2O = dIMP + diphosphate + H(+). The enzyme catalyses XTP + H2O = XMP + diphosphate + H(+). Functionally, pyrophosphatase that hydrolyzes non-canonical purine nucleotides such as inosine triphosphate (ITP), deoxyinosine triphosphate (dITP) or xanthosine 5'-triphosphate (XTP) to their respective monophosphate derivatives. The enzyme does not distinguish between the deoxy- and ribose forms. Probably excludes non-canonical purines from RNA and DNA precursor pools, thus preventing their incorporation into RNA and DNA and avoiding chromosomal lesions. The polypeptide is Inosine triphosphate pyrophosphatase (Encephalitozoon intestinalis (strain ATCC 50506) (Microsporidian parasite)).